The primary structure comprises 209 residues: Guanylate kinase (209 aa).

The region spanning 7 to 185 is the Guanylate kinase-like domain; sequence GNLYIVAAPS…AAMELQSIVI (179 aa). Position 14–21 (14–21) interacts with ATP; the sequence is APSGGGKT.

This sequence belongs to the guanylate kinase family.

It is found in the cytoplasm. The catalysed reaction is GMP + ATP = GDP + ADP. Its function is as follows. Essential for recycling GMP and indirectly, cGMP. This Legionella pneumophila (strain Paris) protein is Guanylate kinase.